The chain runs to 999 residues: Probable hemoglobin and hemoglobin-haptoglobin-binding protein 4 (999 aa).

Residues 1 to 24 form the signal peptide; the sequence is MTNFRLNVLAYSVMLGLTASVAYA. A disordered region spans residues 25–52; sequence EPTNQPTNQPTNQPTNQPTNQPTNQNSN. 6 repeat units span residues 26–29, 30–33, 34–37, 38–41, 42–45, and 46–49. A 6 X 4 AA tandem repeats of P-T-N-Q region spans residues 26 to 49; the sequence is PTNQPTNQPTNQPTNQPTNQPTNQ. Residues 26–50 are compositionally biased toward low complexity; it reads PTNQPTNQPTNQPTNQPTNQPTNQN. Residues 58 to 65 carry the TonB box motif; that stretch reads EQINVLGS. The region spanning 68–195 is the TBDR plug domain; the sequence is NNDNTPPKIA…LGGAVLFETK (128 aa). In terms of domain architecture, TBDR beta-barrel spans 203 to 999; sequence EKDWHIGYKA…NYKLSAEITF (797 aa). Residues 982–999 carry the TonB C-terminal box motif; it reads NRFYSPGRNYKLSAEITF.

This sequence belongs to the TonB-dependent receptor family. Hemoglobin/haptoglobin binding protein subfamily.

Its subcellular location is the cell outer membrane. Functionally, acts as a receptor for hemoglobin or the hemoglobin/haptoglobin complex of the human host and is required for heme uptake. In Haemophilus influenzae (strain ATCC 51907 / DSM 11121 / KW20 / Rd), this protein is Probable hemoglobin and hemoglobin-haptoglobin-binding protein 4.